Consider the following 163-residue polypeptide: Protein-export protein SecB (163 aa).

This sequence belongs to the SecB family. As to quaternary structure, homotetramer, a dimer of dimers. One homotetramer interacts with 1 SecA dimer.

The protein resides in the cytoplasm. Functionally, one of the proteins required for the normal export of preproteins out of the cell cytoplasm. It is a molecular chaperone that binds to a subset of precursor proteins, maintaining them in a translocation-competent state. It also specifically binds to its receptor SecA. The chain is Protein-export protein SecB from Brucella canis (strain ATCC 23365 / NCTC 10854 / RM-666).